A 204-amino-acid polypeptide reads, in one-letter code: MRWYIYRYIYIYMYLYIYVHTYIYIYYCCYYYRDYYLGPPFFLPVFNLPSNPALFFGTALPTYFLFIFSCLFLFLPLLSFLILRFSSLLFCLSDIVSSTTLLRSLHSIADFLFCASFLFIALRSSFSSSLILIPSACNIAFCHFSFSFCLICSSSSFASILFFLASNNFKCDFTSFLAGPFVLPAFLNLCKSEVALAPSSNMIF.

This is an uncharacterized protein from Saccharomyces cerevisiae (strain ATCC 204508 / S288c) (Baker's yeast).